Here is an 86-residue protein sequence, read N- to C-terminus: ATP synthase epsilon chain (86 aa).

Belongs to the ATPase epsilon chain family. In terms of assembly, F-type ATPases have 2 components, CF(1) - the catalytic core - and CF(0) - the membrane proton channel. CF(1) has five subunits: alpha(3), beta(3), gamma(1), delta(1), epsilon(1). CF(0) has three main subunits: a, b and c.

It localises to the cell inner membrane. Produces ATP from ADP in the presence of a proton gradient across the membrane. In Caulobacter vibrioides (strain ATCC 19089 / CIP 103742 / CB 15) (Caulobacter crescentus), this protein is ATP synthase epsilon chain (atpC).